A 516-amino-acid chain; its full sequence is uncharacterized protein (516 aa).

The N-terminal stretch at Met1–Ser22 is a signal peptide. Cys23 carries N-palmitoyl cysteine lipidation. Residue Cys23 is the site of S-diacylglycerol cysteine attachment.

The protein belongs to the MG067/MG068/MG395 family.

The protein localises to the cell membrane. This is an uncharacterized protein from Mycoplasma genitalium (strain ATCC 33530 / DSM 19775 / NCTC 10195 / G37) (Mycoplasmoides genitalium).